Reading from the N-terminus, the 154-residue chain is Ribonuclease P protein subunit p21 (154 aa).

Ala2 carries the post-translational modification N-acetylalanine. Positions 62, 65, 92, and 95 each coordinate Zn(2+). The segment at 117–154 is disordered; that stretch reads QLGSQADSKPLQPLPNTAHSISDRLPEEKMQTQGSSNQ. A compositionally biased stretch (basic and acidic residues) spans 137–146; that stretch reads ISDRLPEEKM.

This sequence belongs to the eukaryotic/archaeal RNase P protein component 4 family. RNase P consists of a catalytic RNA moiety and about 10 protein subunits; POP1, POP4, POP5, POP7, RPP14, RPP21, RPP25, RPP30, RPP38 and RPP40. Within the RNase P complex, POP1, POP7 and RPP25 form the 'finger' subcomplex, POP5, RPP14, RPP40 and homodimeric RPP30 form the 'palm' subcomplex, and RPP21, POP4 and RPP38 form the 'wrist' subcomplex. All subunits of the RNase P complex interact with the catalytic RNA.

Its subcellular location is the nucleus. The protein resides in the nucleolus. In terms of biological role, component of ribonuclease P, a ribonucleoprotein complex that generates mature tRNA molecules by cleaving their 5'-ends. This Homo sapiens (Human) protein is Ribonuclease P protein subunit p21 (RPP21).